Consider the following 142-residue polypeptide: Probable transport accessory protein MmpS1 (142 aa).

2 helical membrane passes run 8-28 and 81-101; these read FWIP…VSRL and VVNA…AVVA.

Belongs to the MmpS family.

The protein localises to the cell membrane. This Mycobacterium bovis (strain ATCC BAA-935 / AF2122/97) protein is Probable transport accessory protein MmpS1 (mmpS1).